A 405-amino-acid polypeptide reads, in one-letter code: Arginine biosynthesis bifunctional protein ArgJ (405 aa).

Substrate is bound by residues Thr-155, Lys-181, Thr-192, Glu-278, Asn-400, and Thr-405. The active-site Nucleophile is the Thr-192.

The protein belongs to the ArgJ family. Heterotetramer of two alpha and two beta chains.

Its subcellular location is the cytoplasm. It carries out the reaction N(2)-acetyl-L-ornithine + L-glutamate = N-acetyl-L-glutamate + L-ornithine. The enzyme catalyses L-glutamate + acetyl-CoA = N-acetyl-L-glutamate + CoA + H(+). It participates in amino-acid biosynthesis; L-arginine biosynthesis; L-ornithine and N-acetyl-L-glutamate from L-glutamate and N(2)-acetyl-L-ornithine (cyclic): step 1/1. The protein operates within amino-acid biosynthesis; L-arginine biosynthesis; N(2)-acetyl-L-ornithine from L-glutamate: step 1/4. Its function is as follows. Catalyzes two activities which are involved in the cyclic version of arginine biosynthesis: the synthesis of N-acetylglutamate from glutamate and acetyl-CoA as the acetyl donor, and of ornithine by transacetylation between N(2)-acetylornithine and glutamate. This Dehalococcoides mccartyi (strain CBDB1) protein is Arginine biosynthesis bifunctional protein ArgJ.